The chain runs to 214 residues: ATP phosphoribosyltransferase (214 aa).

Belongs to the ATP phosphoribosyltransferase family. Short subfamily. As to quaternary structure, heteromultimer composed of HisG and HisZ subunits.

The protein localises to the cytoplasm. It carries out the reaction 1-(5-phospho-beta-D-ribosyl)-ATP + diphosphate = 5-phospho-alpha-D-ribose 1-diphosphate + ATP. It participates in amino-acid biosynthesis; L-histidine biosynthesis; L-histidine from 5-phospho-alpha-D-ribose 1-diphosphate: step 1/9. Catalyzes the condensation of ATP and 5-phosphoribose 1-diphosphate to form N'-(5'-phosphoribosyl)-ATP (PR-ATP). Has a crucial role in the pathway because the rate of histidine biosynthesis seems to be controlled primarily by regulation of HisG enzymatic activity. This Aquifex aeolicus (strain VF5) protein is ATP phosphoribosyltransferase (hisG).